A 262-amino-acid polypeptide reads, in one-letter code: Aminoglycoside (3'') (9) adenylyltransferase (262 aa).

The catalysed reaction is streptomycin + ATP = 3''-O-adenylylstreptomycin + diphosphate. It carries out the reaction spectinomycin + ATP = 9-O-adenylylspectinomycin + diphosphate. Functionally, mediates bacterial resistance to the antibiotics streptomycin and spectinomycin. The protein is Aminoglycoside (3'') (9) adenylyltransferase of Shigella flexneri.